An 892-amino-acid polypeptide reads, in one-letter code: Histone deacetylase 4 (892 aa).

The segment at 145 to 225 (NGNLSNLSVP…MSNVNGHDNS (81 aa)) is disordered. Composition is skewed to polar residues over residues 171–192 (SAPT…ISQL) and 208–222 (ESNS…VNGH). Positions 481–822 (STGLGYDPLM…VQALIGESDD (342 aa)) are histone deacetylase. His628 is a catalytic residue.

This sequence belongs to the histone deacetylase family. HD type 2 subfamily.

The protein localises to the nucleus. The catalysed reaction is N(6)-acetyl-L-lysyl-[histone] + H2O = L-lysyl-[histone] + acetate. Responsible for the deacetylation of lysine residues on the N-terminal part of the core histones (H2A, H2B, H3 and H4). Histone deacetylation gives a tag for epigenetic repression and plays an important role in transcriptional regulation, cell cycle progression and developmental events. Histone deacetylases act via the formation of large multiprotein complexes. The polypeptide is Histone deacetylase 4 (hda-4) (Caenorhabditis briggsae).